A 382-amino-acid chain; its full sequence is Lipid-A-disaccharide synthase (382 aa).

Belongs to the LpxB family.

The enzyme catalyses 2-N,3-O-bis[(3R)-3-hydroxytetradecanoyl]-alpha-D-glucosaminyl 1-phosphate + UDP-2-N,3-O-bis[(3R)-3-hydroxytetradecanoyl]-alpha-D-glucosamine = lipid A disaccharide (E. coli) + UDP + H(+). It catalyses the reaction a lipid X + a UDP-2-N,3-O-bis[(3R)-3-hydroxyacyl]-alpha-D-glucosamine = a lipid A disaccharide + UDP + H(+). It participates in glycolipid biosynthesis; lipid IV(A) biosynthesis; lipid IV(A) from (3R)-3-hydroxytetradecanoyl-[acyl-carrier-protein] and UDP-N-acetyl-alpha-D-glucosamine: step 5/6. Its function is as follows. Condensation of UDP-2,3-diacylglucosamine and 2,3-diacylglucosamine-1-phosphate to form lipid A disaccharide, a precursor of lipid A, a phosphorylated glycolipid that anchors the lipopolysaccharide to the outer membrane of the cell. In Shigella flexneri, this protein is Lipid-A-disaccharide synthase.